The primary structure comprises 552 residues: Membrane protein insertase YidC (552 aa).

A helical membrane pass occupies residues 3 to 23; sequence IKRTVLWVIFFMSAVMLFDNW. Residues 35 to 59 form a disordered region; it reads PSATPTKTVGSAAPGTTTPGTQPAD. The span at 42-59 shows a compositional bias: low complexity; the sequence is TVGSAAPGTTTPGTQPAD. 3 helical membrane-spanning segments follow: residues 364–384, 430–450, and 504–524; these read WGWS…PLSA, FGGC…YWVL, and MMFM…GLVL.

It belongs to the OXA1/ALB3/YidC family. Type 1 subfamily. In terms of assembly, interacts with the Sec translocase complex via SecD. Specifically interacts with transmembrane segments of nascent integral membrane proteins during membrane integration.

It localises to the cell inner membrane. Required for the insertion and/or proper folding and/or complex formation of integral membrane proteins into the membrane. Involved in integration of membrane proteins that insert both dependently and independently of the Sec translocase complex, as well as at least some lipoproteins. Aids folding of multispanning membrane proteins. The chain is Membrane protein insertase YidC from Paraburkholderia phytofirmans (strain DSM 17436 / LMG 22146 / PsJN) (Burkholderia phytofirmans).